A 389-amino-acid polypeptide reads, in one-letter code: S-adenosylmethionine synthase (389 aa).

Position 19 (His-19) interacts with ATP. Asp-21 lines the Mg(2+) pocket. Glu-47 is a K(+) binding site. L-methionine-binding residues include Glu-60 and Gln-103. The tract at residues 103-113 is flexible loop; it reads QSVDIAQGVDR. Residues 168-170, 234-235, Asp-243, 249-250, Ala-266, and Lys-270 contribute to the ATP site; these read DGK, RF, and RK. Residue Asp-243 participates in L-methionine binding. Lys-274 provides a ligand contact to L-methionine.

This sequence belongs to the AdoMet synthase family. Homotetramer; dimer of dimers. The cofactor is Mg(2+). K(+) serves as cofactor.

Its subcellular location is the cytoplasm. The enzyme catalyses L-methionine + ATP + H2O = S-adenosyl-L-methionine + phosphate + diphosphate. It participates in amino-acid biosynthesis; S-adenosyl-L-methionine biosynthesis; S-adenosyl-L-methionine from L-methionine: step 1/1. Its function is as follows. Catalyzes the formation of S-adenosylmethionine (AdoMet) from methionine and ATP. The overall synthetic reaction is composed of two sequential steps, AdoMet formation and the subsequent tripolyphosphate hydrolysis which occurs prior to release of AdoMet from the enzyme. The protein is S-adenosylmethionine synthase of Maridesulfovibrio salexigens (strain ATCC 14822 / DSM 2638 / NCIMB 8403 / VKM B-1763) (Desulfovibrio salexigens).